Reading from the N-terminus, the 832-residue chain is Protein P (832 aa).

The interval 1–177 (MPLSYQHFRR…FCGSPYSWEQ (177 aa)) is terminal protein domain (TP). The spacer stretch occupies residues 178 to 335 (DLQHGAESIH…YCLSLIVNLL (158 aa)). 2 disordered regions span residues 186-218 (IHQQ…QSQQ) and 239-266 (TARR…SCLY). The polymerase/reverse transcriptase domain (RT) stretch occupies residues 336–679 (EDWGPCDEYG…YLNLYPVARQ (344 aa)). In terms of domain architecture, Reverse transcriptase spans 346-589 (EHHIRIPRTP…YSLHFMGYVI (244 aa)). 3 residues coordinate Mg(2+): aspartate 418, aspartate 540, and aspartate 541.

Belongs to the hepadnaviridae P protein family.

The catalysed reaction is DNA(n) + a 2'-deoxyribonucleoside 5'-triphosphate = DNA(n+1) + diphosphate. It carries out the reaction Endonucleolytic cleavage to 5'-phosphomonoester.. Its activity is regulated as follows. Activated by host HSP70 and HSP40 in vitro to be able to bind the epsilon loop of the pgRNA. Because deletion of the RNase H region renders the protein partly chaperone-independent, the chaperones may be needed indirectly to relieve occlusion of the RNA-binding site by this domain. Inhibited by several reverse-transcriptase inhibitors: Lamivudine, Adefovir and Entecavir. Functionally, multifunctional enzyme that converts the viral RNA genome into dsDNA in viral cytoplasmic capsids. This enzyme displays a DNA polymerase activity that can copy either DNA or RNA templates, and a ribonuclease H (RNase H) activity that cleaves the RNA strand of RNA-DNA heteroduplexes in a partially processive 3'- to 5'-endonucleasic mode. Neo-synthesized pregenomic RNA (pgRNA) are encapsidated together with the P protein, and reverse-transcribed inside the nucleocapsid. Initiation of reverse-transcription occurs first by binding the epsilon loop on the pgRNA genome, and is initiated by protein priming, thereby the 5'-end of (-)DNA is covalently linked to P protein. Partial (+)DNA is synthesized from the (-)DNA template and generates the relaxed circular DNA (RC-DNA) genome. After budding and infection, the RC-DNA migrates in the nucleus, and is converted into a plasmid-like covalently closed circular DNA (cccDNA). The activity of P protein does not seem to be necessary for cccDNA generation, and is presumably released from (+)DNA by host nuclear DNA repair machinery. In Homo sapiens (Human), this protein is Protein P.